Here is a 451-residue protein sequence, read N- to C-terminus: UPF0210 protein CLH_1879 (451 aa).

This sequence belongs to the UPF0210 family. In terms of assembly, homodimer.

The chain is UPF0210 protein CLH_1879 from Clostridium botulinum (strain Alaska E43 / Type E3).